The sequence spans 105 residues: Large ribosomal subunit protein uL24 (105 aa).

This sequence belongs to the universal ribosomal protein uL24 family. As to quaternary structure, part of the 50S ribosomal subunit.

Its function is as follows. One of two assembly initiator proteins, it binds directly to the 5'-end of the 23S rRNA, where it nucleates assembly of the 50S subunit. One of the proteins that surrounds the polypeptide exit tunnel on the outside of the subunit. The sequence is that of Large ribosomal subunit protein uL24 from Staphylococcus haemolyticus (strain JCSC1435).